Reading from the N-terminus, the 321-residue chain is Ribosomal RNA small subunit methyltransferase H (321 aa).

Residues 43 to 45, aspartate 63, phenylalanine 89, aspartate 110, and glutamine 117 each bind S-adenosyl-L-methionine; that span reads GGH. The disordered stretch occupies residues 286-321; the sequence is HPAGKALRAGPRETRDNPRSRSAVLRVAERSERHAA. Basic and acidic residues-rich tracts occupy residues 295–304 and 312–321; these read GPRETRDNPR and VAERSERHAA.

It belongs to the methyltransferase superfamily. RsmH family.

Its subcellular location is the cytoplasm. The catalysed reaction is cytidine(1402) in 16S rRNA + S-adenosyl-L-methionine = N(4)-methylcytidine(1402) in 16S rRNA + S-adenosyl-L-homocysteine + H(+). Functionally, specifically methylates the N4 position of cytidine in position 1402 (C1402) of 16S rRNA. The sequence is that of Ribosomal RNA small subunit methyltransferase H from Acidithiobacillus ferrooxidans (strain ATCC 23270 / DSM 14882 / CIP 104768 / NCIMB 8455) (Ferrobacillus ferrooxidans (strain ATCC 23270)).